Reading from the N-terminus, the 58-residue chain is MKIHKCSFCGAEIPPGYGIMYVRNDGTIQRYCSRKCFVSATKYGRNPRKLAWVRKRQK.

Zn(2+) contacts are provided by cysteine 6, cysteine 9, cysteine 32, and cysteine 36. Residues 6 to 36 (CSFCGAEIPPGYGIMYVRNDGTIQRYCSRKC) form a C4-type zinc finger.

Belongs to the eukaryotic ribosomal protein eL24 family. Part of the 50S ribosomal subunit. Forms a cluster with proteins L3 and L14. The cofactor is Zn(2+).

Functionally, binds to the 23S rRNA. This is Large ribosomal subunit protein eL24 from Pyrobaculum neutrophilum (strain DSM 2338 / JCM 9278 / NBRC 100436 / V24Sta) (Thermoproteus neutrophilus).